The primary structure comprises 245 residues: MAGHSHWAGIKHKKGANDAARGKIFQKMFKEIYVAATGPGGTDPSSNPALRLAISKAKAKSMPKANIERALDKAKGNAKDGAVFTEIIYNATISGGATFLVITLSDNVNRTTSNIQSYFNKQNAKLGKTGTIPFQFDHKGIMEISKSLVDEESLTIVCLENGAEDIEATDESFIITTSVEDFSTCKSAIESNLNITEFMQCEITYLPNATVTFTGEKAQKIQDFIAKLEDDDDVQEVFHNIEFEE.

The protein belongs to the TACO1 family.

The protein localises to the cytoplasm. This chain is Probable transcriptional regulatory protein MAG6590, found in Mycoplasmopsis agalactiae (strain NCTC 10123 / CIP 59.7 / PG2) (Mycoplasma agalactiae).